The chain runs to 124 residues: Small ribosomal subunit protein uS12 (124 aa).

Asp-89 is subject to 3-methylthioaspartic acid. The tract at residues 104 to 124 (TAGVENRKQSRSKYGAKRPKK) is disordered. The segment covering 112-124 (QSRSKYGAKRPKK) has biased composition (basic residues).

It belongs to the universal ribosomal protein uS12 family. As to quaternary structure, part of the 30S ribosomal subunit. Contacts proteins S8 and S17. May interact with IF1 in the 30S initiation complex.

Functionally, with S4 and S5 plays an important role in translational accuracy. Interacts with and stabilizes bases of the 16S rRNA that are involved in tRNA selection in the A site and with the mRNA backbone. Located at the interface of the 30S and 50S subunits, it traverses the body of the 30S subunit contacting proteins on the other side and probably holding the rRNA structure together. The combined cluster of proteins S8, S12 and S17 appears to hold together the shoulder and platform of the 30S subunit. The polypeptide is Small ribosomal subunit protein uS12 (Pseudothermotoga lettingae (strain ATCC BAA-301 / DSM 14385 / NBRC 107922 / TMO) (Thermotoga lettingae)).